The sequence spans 423 residues: Protein disulfide isomerase-like 5-2 (423 aa).

Residues 1 to 35 (MAATTTRPLPLLLLLLLPPLLLLLLSFHAAAAAAA) form the signal peptide. The 114-residue stretch at 36–149 (EEFPRDGRVI…LVRNLNKFVA (114 aa)) folds into the Thioredoxin domain. Residues C71 and C74 each act as nucleophile in the active site. A disulfide bridge connects residues C71 and C74. N181 carries an N-linked (GlcNAc...) asparagine glycan. The chain crosses the membrane as a helical span at residues 386 to 406 (LVSLNSLYILICVFALLGVMI).

The protein belongs to the protein disulfide isomerase family.

The protein resides in the membrane. Functionally, acts as a protein-folding catalyst that interacts with nascent polypeptides to catalyze the formation, isomerization, and reduction or oxidation of disulfide bonds. May play a role in storage protein biogenesis. The polypeptide is Protein disulfide isomerase-like 5-2 (PDIL5-2) (Oryza sativa subsp. japonica (Rice)).